The sequence spans 262 residues: Phosphonates import ATP-binding protein PhnC (262 aa).

Positions 5–253 constitute an ABC transporter domain; that stretch reads IRVEKLAKTF…RFDHLYRSIN (249 aa). Position 37–44 (37–44) interacts with ATP; sequence GPSGSGKS.

It belongs to the ABC transporter superfamily. Phosphonates importer (TC 3.A.1.9.1) family. In terms of assembly, the complex is composed of two ATP-binding proteins (PhnC), two transmembrane proteins (PhnE) and a solute-binding protein (PhnD).

It localises to the cell inner membrane. The enzyme catalyses phosphonate(out) + ATP + H2O = phosphonate(in) + ADP + phosphate + H(+). Its function is as follows. Part of the ABC transporter complex PhnCDE involved in phosphonates import. Responsible for energy coupling to the transport system. This chain is Phosphonates import ATP-binding protein PhnC, found in Escherichia coli O6:K15:H31 (strain 536 / UPEC).